Consider the following 121-residue polypeptide: Flagellar hook-basal body complex protein FliE (121 aa).

The protein belongs to the FliE family.

It is found in the bacterial flagellum basal body. The chain is Flagellar hook-basal body complex protein FliE from Saccharophagus degradans (strain 2-40 / ATCC 43961 / DSM 17024).